The primary structure comprises 406 residues: MTFSVDKVRADFPVLSREVNGLPLAYLDSAASAQKPSQVIDAEAEFYRHGYAAVHRGIHTLSAQATEKMENVRKRASLFINARSAEELVFVRGTTEGINLVANSWGNSNVRAGDNIIISQMEHHANIVPWQMLCARVGAELRVIPLNPDGTLQLETLPTLFDEKTRLLAITHVSNVLGTENPLAEIITLAHQHGAKVLVDGAQAVMHHPVDVQALDCDFYVFSGHKLYGPTGIGILYVKEALLQEMPPWEGGGSMIATVSLSEGTTWTKAPWRFEAGTPNTGGIIGLGAALEYVSALGLNNIAEYEQNLMHYALSQLESVPDLTLYGPQNRLGVIAFNLGKHHAYDVGSFLDNYGIAVRTGHHCAMPLMAYYNVPAMCRASLAMYNTHEEVDRLVTGLQRIHRLLG.

At K226 the chain carries N6-(pyridoxal phosphate)lysine. The active-site Cysteine persulfide intermediate is C364.

It belongs to the class-V pyridoxal-phosphate-dependent aminotransferase family. Csd subfamily. In terms of assembly, homodimer. Interacts with SufE and the SufBCD complex composed of SufB, SufC and SufD. The interaction with SufE is required to mediate the direct transfer of the sulfur atom from the S-sulfanylcysteine. Pyridoxal 5'-phosphate serves as cofactor.

It is found in the cytoplasm. It carries out the reaction (sulfur carrier)-H + L-cysteine = (sulfur carrier)-SH + L-alanine. The enzyme catalyses L-selenocysteine + AH2 = hydrogenselenide + L-alanine + A + H(+). It participates in cofactor biosynthesis; iron-sulfur cluster biosynthesis. In terms of biological role, cysteine desulfurases mobilize the sulfur from L-cysteine to yield L-alanine, an essential step in sulfur metabolism for biosynthesis of a variety of sulfur-containing biomolecules. Component of the suf operon, which is activated and required under specific conditions such as oxidative stress and iron limitation. Acts as a potent selenocysteine lyase in vitro, that mobilizes selenium from L-selenocysteine. Selenocysteine lyase activity is however unsure in vivo. The chain is Cysteine desulfurase from Shigella sonnei (strain Ss046).